A 359-amino-acid polypeptide reads, in one-letter code: Peptide methionine sulfoxide reductase MsrA/MsrB (359 aa).

The interval 36-189 is peptide methionine sulfoxide reductase A; sequence RVIYLAGGCF…PGGYCHIDLK (154 aa). Cys-44 is a catalytic residue. Residues 206–329 form the MsrB domain; sequence DEVLKKKLTK…NSAALRFIPL (124 aa). The active-site Nucleophile is Cys-318.

It in the N-terminal section; belongs to the MsrA Met sulfoxide reductase family. This sequence in the C-terminal section; belongs to the MsrB Met sulfoxide reductase family.

It carries out the reaction L-methionyl-[protein] + [thioredoxin]-disulfide + H2O = L-methionyl-(S)-S-oxide-[protein] + [thioredoxin]-dithiol. It catalyses the reaction [thioredoxin]-disulfide + L-methionine + H2O = L-methionine (S)-S-oxide + [thioredoxin]-dithiol. The catalysed reaction is L-methionyl-[protein] + [thioredoxin]-disulfide + H2O = L-methionyl-(R)-S-oxide-[protein] + [thioredoxin]-dithiol. In terms of biological role, has an important function as a repair enzyme for proteins that have been inactivated by oxidation. Catalyzes the reversible oxidation-reduction of methionine sulfoxide in proteins to methionine. The protein is Peptide methionine sulfoxide reductase MsrA/MsrB (msrAB) of Helicobacter pylori (strain J99 / ATCC 700824) (Campylobacter pylori J99).